The primary structure comprises 319 residues: Mitochondrial thiamine pyrophosphate carrier 1 (319 aa).

Solcar repeat units lie at residues 12 to 110 (GQRY…VTQS), 121 to 207 (PQPA…VRVP), and 214 to 309 (PFGS…VLKI). 6 helical membrane passes run 17-35 (VVAA…VAPL), 91-107 (LLYI…YRTV), 127-147 (FVSG…FDLL), 182-201 (GVSA…FATY), 221-237 (TAGV…VFPL), and 284-301 (GLTV…VTMW).

The protein belongs to the mitochondrial carrier (TC 2.A.29) family.

It is found in the mitochondrion inner membrane. In terms of biological role, mitochondrial transporter that mediates uptake of thiamine pyrophosphate (ThPP) into mitochondria. The polypeptide is Mitochondrial thiamine pyrophosphate carrier 1 (TPC1) (Coccidioides immitis (strain RS) (Valley fever fungus)).